A 222-amino-acid polypeptide reads, in one-letter code: MAGKPKLHYTRGRGKMESIRWLLAAAGVEFEEEFIEKKEDLEKLRNDGSLLFQQVPMVEIDGMKMVQSRAILCYIAGKYNLYGKDLKERAWIDMYVEGTTDLMGMIMALPFQAADVKEKNIALITERATTRYFPVYEKALKDHGQDYLVGNKLSWADIHLLEAILMTEELKSDILSAFPLLQAFKGRMSNVPTIKKFLQPGSQRKPPLDEKSIANVRKIFSF.

Positions 3–83 (GKPKLHYTRG…YIAGKYNLYG (81 aa)) constitute a GST N-terminal domain. Residues tyrosine 9, arginine 45, 54–55 (QV), and 67–68 (QS) contribute to the glutathione site. The 124-residue stretch at 85-208 (DLKERAWIDM…QPGSQRKPPL (124 aa)) folds into the GST C-terminal domain.

It belongs to the GST superfamily. Alpha family. In terms of assembly, homodimer.

It localises to the cytoplasm. The catalysed reaction is RX + glutathione = an S-substituted glutathione + a halide anion + H(+). Functionally, conjugation of reduced glutathione to a wide number of exogenous and endogenous hydrophobic electrophiles. The sequence is that of Glutathione S-transferase from Gallus gallus (Chicken).